The following is a 547-amino-acid chain: Chaperonin GroEL (547 aa).

ATP contacts are provided by residues 30–33, Lys-51, 87–91, Gly-415, and Asp-496; these read TLGP and DGTTT. Residues 528–547 form a disordered region; the sequence is KEGAAPAGGMPDMGGMGGMM. The span at 538-547 shows a compositional bias: gly residues; that stretch reads PDMGGMGGMM.

The protein belongs to the chaperonin (HSP60) family. As to quaternary structure, forms a cylinder of 14 subunits composed of two heptameric rings stacked back-to-back. Interacts with the co-chaperonin GroES.

The protein resides in the cytoplasm. It catalyses the reaction ATP + H2O + a folded polypeptide = ADP + phosphate + an unfolded polypeptide.. Its function is as follows. Together with its co-chaperonin GroES, plays an essential role in assisting protein folding. The GroEL-GroES system forms a nano-cage that allows encapsulation of the non-native substrate proteins and provides a physical environment optimized to promote and accelerate protein folding. The sequence is that of Chaperonin GroEL from Ruegeria sp. (strain TM1040) (Silicibacter sp.).